A 269-amino-acid chain; its full sequence is Putative pyruvate, phosphate dikinase regulatory protein (269 aa).

151–158 (GVSRSSKT) provides a ligand contact to ADP.

Belongs to the pyruvate, phosphate/water dikinase regulatory protein family. PDRP subfamily.

It catalyses the reaction N(tele)-phospho-L-histidyl/L-threonyl-[pyruvate, phosphate dikinase] + ADP = N(tele)-phospho-L-histidyl/O-phospho-L-threonyl-[pyruvate, phosphate dikinase] + AMP + H(+). The enzyme catalyses N(tele)-phospho-L-histidyl/O-phospho-L-threonyl-[pyruvate, phosphate dikinase] + phosphate + H(+) = N(tele)-phospho-L-histidyl/L-threonyl-[pyruvate, phosphate dikinase] + diphosphate. Bifunctional serine/threonine kinase and phosphorylase involved in the regulation of the pyruvate, phosphate dikinase (PPDK) by catalyzing its phosphorylation/dephosphorylation. The polypeptide is Putative pyruvate, phosphate dikinase regulatory protein (Geobacter metallireducens (strain ATCC 53774 / DSM 7210 / GS-15)).